The chain runs to 206 residues: Pyridoxine/pyridoxamine 5'-phosphate oxidase (206 aa).

Residues 55–60 (RVVLLK), 70–71 (YT), R76, K77, and Q99 each bind FMN. Position 60 (K60) interacts with substrate. Residues Y117, R121, and S125 each coordinate substrate. FMN contacts are provided by residues 134-135 (QS) and W179. 185 to 187 (RLH) provides a ligand contact to substrate. R189 contacts FMN.

Belongs to the pyridoxamine 5'-phosphate oxidase family. In terms of assembly, homodimer. FMN is required as a cofactor.

The catalysed reaction is pyridoxamine 5'-phosphate + O2 + H2O = pyridoxal 5'-phosphate + H2O2 + NH4(+). It carries out the reaction pyridoxine 5'-phosphate + O2 = pyridoxal 5'-phosphate + H2O2. Its pathway is cofactor metabolism; pyridoxal 5'-phosphate salvage; pyridoxal 5'-phosphate from pyridoxamine 5'-phosphate: step 1/1. The protein operates within cofactor metabolism; pyridoxal 5'-phosphate salvage; pyridoxal 5'-phosphate from pyridoxine 5'-phosphate: step 1/1. In terms of biological role, catalyzes the oxidation of either pyridoxine 5'-phosphate (PNP) or pyridoxamine 5'-phosphate (PMP) into pyridoxal 5'-phosphate (PLP). This is Pyridoxine/pyridoxamine 5'-phosphate oxidase from Myxococcus xanthus (strain DK1622).